Reading from the N-terminus, the 521-residue chain is Vang-like protein 2 (521 aa).

Residues Met1 to His81 form a disordered region. Residues Met1–Gly108 are Cytoplasmic-facing. Over residues Gly15 to Lys33 the composition is skewed to basic residues. Positions Glu57 to Asn67 are enriched in basic and acidic residues. The span at Gly69–His81 shows a compositional bias: low complexity. A helical transmembrane segment spans residues Val109 to Leu129. At Pro130 to Gly147 the chain is on the extracellular side. A helical transmembrane segment spans residues Leu148 to Phe168. Topologically, residues Arg169–Val178 are cytoplasmic. The helical transmembrane segment at Phe179–Phe199 threads the bilayer. Over Tyr200–Gln217 the chain is Extracellular. Residues Phe218 to Glu238 form a helical membrane-spanning segment. The Cytoplasmic portion of the chain corresponds to Leu239–Val521.

This sequence belongs to the Vang family. As to quaternary structure, homodimer and heterodimer with VANGL1. Interacts through its C-terminal region with the N-terminal half of DVL1, DVL2 and DVL3. The PDZ domain of DVL1, DVL2 and DVL3 is required for the interaction. Also interacts with the PDZ domains of MAGI3, SCRIB/SCRB1 and FZD3. Interacts with PRICKLE3.

Its subcellular location is the cell membrane. Functionally, involved in the control of early morphogenesis and patterning of both axial midline structures and the development of neural plate. Plays a role in the regulation of planar cell polarity, particularly in the orientation of stereociliary bundles in the cochlea. Required for polarization and movement of myocardializing cells in the outflow tract and seems to act via RHOA signaling to regulate this process. Required for cell surface localization of FZD3 and FZD6 in the inner ear. This Homo sapiens (Human) protein is Vang-like protein 2 (VANGL2).